Consider the following 224-residue polypeptide: Claudin-19 (224 aa).

Over 1 to 7 (MANSGLQ) the chain is Cytoplasmic. A helical transmembrane segment spans residues 8-28 (LLGYFLALGGWVGIIASTALP). Residues 29–81 (QWKQSSYAGDAIITAVGLYEGLWMSCASQSTGQVQCKLYDSLLALDGHIQSAR) lie on the Extracellular side of the membrane. Cysteines 54 and 64 form a disulfide. The chain crosses the membrane as a helical span at residues 82–102 (ALMVVAVLLGFVAMVLSVVGM). At 103–117 (KCTRVGDSNPIAKGR) the chain is on the cytoplasmic side. A helical membrane pass occupies residues 118–138 (VAIAGGALFILAGLCTLTAVS). Topologically, residues 139–160 (WYATLVTQEFFNPSTPVNARYE) are extracellular. Residues 161–181 (FGPALFVGWASAGLAVLGGSF) traverse the membrane as a helical segment. The Cytoplasmic segment spans residues 182–224 (LCCTCPEPERPNSSPQPYRPGPSAAAREPVVKLPASAKGPLGV). Residues 191–224 (RPNSSPQPYRPGPSAAAREPVVKLPASAKGPLGV) are disordered.

The protein belongs to the claudin family. Can form homo- and heteropolymeric tight junction strands. Interacts with other claudins including CLDN3, CLDN10, CLDN16 and CLDN18 with highest affinity for CLDN16. Interacts (via PDZ-binding motif TRV) with TJP1 (via PDZ domain).

It is found in the cell junction. It localises to the tight junction. The protein localises to the cell membrane. The catalysed reaction is Mg(2+)(in) = Mg(2+)(out). The enzyme catalyses Ca(2+)(in) = Ca(2+)(out). It carries out the reaction Na(+)(in) = Na(+)(out). It catalyses the reaction K(+)(in) = K(+)(out). The catalysed reaction is Rb(+)(in) = Rb(+)(out). The enzyme catalyses Cs(+)(in) = Cs(+)(out). It carries out the reaction Li(+)(in) = Li(+)(out). In terms of biological role, forms paracellular channels: coassembles with CLDN16 into tight junction strands with cation-selective channels through the strands, conveying epithelial permeability in a process known as paracellular tight junction permeability. Involved in the maintenance of ion gradients along the nephron. In the thick ascending limb (TAL) of Henle's loop, facilitates sodium paracellular permeability from the interstitial compartment to the lumen, contributing to the lumen-positive transepithelial potential that drives paracellular magnesium and calcium reabsorption. Forms paracellular barriers on its own. In the peripheral nervous system, represents a major constituent of the tight junctions in Schwann cells and contributes to electrical sealing. During retinal neurogenesis, may regulate the barrier properties of tight junctions in retinal pigment epithelium, required for proper retinal tissue differentiation and vision. The sequence is that of Claudin-19 from Homo sapiens (Human).